A 66-amino-acid chain; its full sequence is Large ribosomal subunit protein bL33 (66 aa).

Belongs to the bacterial ribosomal protein bL33 family.

The chain is Large ribosomal subunit protein bL33 from Wolbachia pipientis wMel.